The chain runs to 96 residues: Large ribosomal subunit protein eL14 (96 aa).

The protein belongs to the eukaryotic ribosomal protein eL14 family.

This Sulfolobus acidocaldarius (strain ATCC 33909 / DSM 639 / JCM 8929 / NBRC 15157 / NCIMB 11770) protein is Large ribosomal subunit protein eL14.